Reading from the N-terminus, the 374-residue chain is 3-isopropylmalate dehydrogenase (374 aa).

83–96 (GPKWDNLPPEIRPE) contributes to the NAD(+) binding site. Residues R104, R114, R142, and D231 each contribute to the substrate site. Mg(2+) contacts are provided by D231, D255, and D259. 288–300 (GSAPDIAGQNKAN) contacts NAD(+).

This sequence belongs to the isocitrate and isopropylmalate dehydrogenases family. LeuB type 1 subfamily. In terms of assembly, homodimer. Mg(2+) serves as cofactor. Mn(2+) is required as a cofactor.

Its subcellular location is the cytoplasm. It catalyses the reaction (2R,3S)-3-isopropylmalate + NAD(+) = 4-methyl-2-oxopentanoate + CO2 + NADH. It functions in the pathway amino-acid biosynthesis; L-leucine biosynthesis; L-leucine from 3-methyl-2-oxobutanoate: step 3/4. Catalyzes the oxidation of 3-carboxy-2-hydroxy-4-methylpentanoate (3-isopropylmalate) to 3-carboxy-4-methyl-2-oxopentanoate. The product decarboxylates to 4-methyl-2 oxopentanoate. This chain is 3-isopropylmalate dehydrogenase, found in Carboxydothermus hydrogenoformans (strain ATCC BAA-161 / DSM 6008 / Z-2901).